The primary structure comprises 109 residues: Putative double-stranded DNA mimic protein YciU (109 aa).

Belongs to the putative dsDNA mimic protein family.

In terms of biological role, may act as a double-stranded DNA (dsDNA) mimic. Probably regulates the activity of a dsDNA-binding protein. This chain is Putative double-stranded DNA mimic protein YciU, found in Shigella boydii serotype 18 (strain CDC 3083-94 / BS512).